Reading from the N-terminus, the 610-residue chain is UvrABC system protein C (610 aa).

The GIY-YIG domain occupies 16 to 94 (SQPGVYRMYD…IKLYQPRYNV (79 aa)). A UVR domain is found at 204–239 (DQVLTQLIARMEKASQDLAFEEAARIRDQIQAVRRV).

The protein belongs to the UvrC family. In terms of assembly, interacts with UvrB in an incision complex.

The protein resides in the cytoplasm. The UvrABC repair system catalyzes the recognition and processing of DNA lesions. UvrC both incises the 5' and 3' sides of the lesion. The N-terminal half is responsible for the 3' incision and the C-terminal half is responsible for the 5' incision. The protein is UvrABC system protein C of Salmonella paratyphi A (strain ATCC 9150 / SARB42).